Here is a 1661-residue protein sequence, read N- to C-terminus: Cortactin-binding protein 2 (1661 aa).

Disordered regions lie at residues 1–27, 206–226, 329–438, 454–477, and 493–612; these read MATDGASCEPDFSRASEDAAEATAEAT, EKKRTNELEEELSTEKRRSTE, TVPV…SLHP, NANDQDQNGNTTQSPPSRDVSPTS, and QALS…LPPK. Residues 124–280 adopt a coiled-coil conformation; that stretch reads KMQERMSTQL…EQLKRGNDSK (157 aa). The span at 383–394 shows a compositional bias: low complexity; that stretch reads GPSTGSTPDLPS. Residues 412–426 are compositionally biased toward polar residues; it reads SIASQNYSQASSLHS. The span at 454–466 shows a compositional bias: low complexity; sequence NANDQDQNGNTTQ. Polar residues predominate over residues 467–477; that stretch reads SPPSRDVSPTS. An Asymmetric dimethylarginine modification is found at R497. ANK repeat units lie at residues 707–737, 741–770, 774–803, 807–836, and 840–869; these read GRPTLLQQAAAQGNVTLLSMLLNEEGLDINY, DGHSALYSAAKNGHTDCVRLLLNAEAQVNA, NGFTPLCAAAAQGHDKCVELLIAYRANINH, GGQTPLYLACKNGNKECIKLLLEAGTDRSV, and DGWTPVHAAVDTGNVDSLKLLMYHRAPACG. The disordered stretch occupies residues 876-896; it reads EPESDVFDLDGGGERPEGTVK. The ANK 6 repeat unit spans residues 910-940; that stretch reads EGWTAAHIAASKGFKNCLEILCQHGGLEPER. The disordered stretch occupies residues 1444–1480; the sequence is GKKKGENGAWRKVSTSPRKKSGRFPSPTWSKPDLSDE. S1522 bears the Phosphoserine mark. Disordered stretches follow at residues 1555-1597 and 1614-1661; these read RRFD…SNSK and PRSK…KPNK. Residues 1580 to 1597 show a composition bias toward polar residues; the sequence is KEVSPLSSHQTTECSNSK. Low complexity predominate over residues 1622–1636; sequence SQNTRRSSSSSNTRQ. Residues 1643 to 1661 show a composition bias toward basic and acidic residues; sequence SKDEIWNLRKNEQVEKPNK.

In terms of assembly, interacts with CTTN/cortactin SH3 domain. Interacts with STRN, STRN4/zinedin and MOB4/phocein; this interactions mediate the association with the STRIPAK core complex and may regulate dendritic spine distribution of the STRIPAK complex in hippocampal neurons. Activation of glutamate receptors weakens the interaction with STRN and STRN4.

It localises to the cytoplasm. The protein localises to the cell cortex. The protein resides in the cell projection. Its subcellular location is the dendritic spine. In terms of biological role, regulates the dendritic spine distribution of CTTN/cortactin in hippocampal neurons, and thus controls dendritic spinogenesis and dendritic spine maintenance. Associates with the striatin-interacting phosphatase and kinase (STRIPAK) core complex to regulate dendritic spine distribution of the STRIPAK complex in hippocampal neurons. This chain is Cortactin-binding protein 2 (CTTNBP2), found in Loxodonta africana (African elephant).